We begin with the raw amino-acid sequence, 400 residues long: Na(+)/H(+) antiporter NhaA (400 aa).

The next 12 helical transmembrane spans lie at 26 to 46, 71 to 91, 107 to 127, 137 to 157, 166 to 186, 189 to 209, 212 to 232, 233 to 253, 273 to 293, 299 to 319, 340 to 360, and 373 to 393; these read AGGI…NSPL, LIHW…GMEV, IFPA…YWFI, GWAI…ALLS, IFLL…IALF, HGLS…LILL, FKVS…ASVL, KSGV…PLKG, FVIL…GIDV, PLLL…IFGF, IFAV…LASL, and LSRL…YLFL.

It belongs to the NhaA Na(+)/H(+) (TC 2.A.33) antiporter family.

It localises to the cell inner membrane. The enzyme catalyses Na(+)(in) + 2 H(+)(out) = Na(+)(out) + 2 H(+)(in). Its function is as follows. Na(+)/H(+) antiporter that extrudes sodium in exchange for external protons. This is Na(+)/H(+) antiporter NhaA from Haemophilus influenzae (strain PittEE).